The following is a 250-amino-acid chain: Transmembrane ascorbate-dependent reductase CYB561 (250 aa).

At methionine 1 the chain carries N-acetylmethionine. The Cytoplasmic segment spans residues 1–15 (MEHSSASVPAALPYY). The chain crosses the membrane as a helical span at residues 16–36 (VAFSQLLGLTVVAVTGAWLGL). One can recognise a Cytochrome b561 domain in the interval 18–219 (FSQLLGLTVV…FGVVVLYILA (202 aa)). The Vesicular segment spans residues 37–50 (YRGGIAWESSLQFN). Residues 51–71 (VHPLCMVIGMIFLQGDALLVY) traverse the membrane as a helical segment. Heme b contacts are provided by histidine 52, arginine 72, and lysine 79. Residues 72 to 83 (RVFRREAKRTTK) lie on the Cytoplasmic side of the membrane. L-ascorbate is bound by residues lysine 79 and lysine 83. A helical transmembrane segment spans residues 84–104 (ILHGLLHVFAFIIALVGLVAV). Heme b contacts are provided by residues histidine 86, 115-118 (DLYS), and histidine 120. The Vesicular portion of the chain corresponds to 105-123 (FDYHKKKGYADLYSLHSWC). The chain crosses the membrane as a helical span at residues 124–144 (GILVFVLYFVQWLVGFSFFLF). Residues 145-157 (PGASFSLRSRYRP) are Cytoplasmic-facing. Residue arginine 152 coordinates L-ascorbate. A helical membrane pass occupies residues 158-178 (QHIFFGATIFLFSVGTALLGL). Histidine 159 and glutamate 180 together coordinate heme b. The Vesicular portion of the chain corresponds to 179–197 (KEALLFKLGSKYSTFEPEG). The chain crosses the membrane as a helical span at residues 198–218 (VLANVLGLLLVCFGVVVLYIL). Over 219 to 250 (AQADWKRPSQAEEQALSMDFKTLTEGDSPSPQ) the chain is Cytoplasmic. Residue lysine 224 coordinates heme b. Phosphoserine occurs at positions 246 and 248.

Heme b is required as a cofactor. As to expression, abundantly distributed in a number of neuroendocrine tissues.

It is found in the cytoplasmic vesicle. The protein localises to the secretory vesicle. The protein resides in the chromaffin granule membrane. It carries out the reaction monodehydro-L-ascorbate radical(out) + L-ascorbate(in) = monodehydro-L-ascorbate radical(in) + L-ascorbate(out). Transmembrane reductase that uses ascorbate as an electron donor in the cytoplasm and transfers electrons across membranes to reduce monodehydro-L-ascorbate radical in the lumen of secretory vesicles. It is therefore involved the regeneration and homeostasis within secretory vesicles of ascorbate which in turn provides reducing equivalents needed to support the activity of intravesicular enzymes. This chain is Transmembrane ascorbate-dependent reductase CYB561, found in Mus musculus (Mouse).